The chain runs to 255 residues: uncharacterized protein (255 aa).

It belongs to the methyltransferase superfamily.

This is an uncharacterized protein from Mycobacterium marinum (strain ATCC BAA-535 / M).